The following is a 210-amino-acid chain: ER membrane protein complex subunit 8 (210 aa).

The 147-residue stretch at 4 to 150 (VKLTTQAYCK…IHVYEHHENR (147 aa)) folds into the MPN domain.

This sequence belongs to the EMC8/EMC9 family. In terms of assembly, component of the ER membrane protein complex (EMC). EMC8 and EMC9 are mutually exclusive subunits of the EMC complex. As to expression, expressed in liver, pancreas, heart, lung, kidney, brain, skeletal muscle, and placenta. Expression levels are highest in pancreas and moderate in heart, skeletal muscle, and placenta.

It is found in the endoplasmic reticulum membrane. In terms of biological role, part of the endoplasmic reticulum membrane protein complex (EMC) that enables the energy-independent insertion into endoplasmic reticulum membranes of newly synthesized membrane proteins. Preferentially accommodates proteins with transmembrane domains that are weakly hydrophobic or contain destabilizing features such as charged and aromatic residues. Involved in the cotranslational insertion of multi-pass membrane proteins in which stop-transfer membrane-anchor sequences become ER membrane spanning helices. It is also required for the post-translational insertion of tail-anchored/TA proteins in endoplasmic reticulum membranes. By mediating the proper cotranslational insertion of N-terminal transmembrane domains in an N-exo topology, with translocated N-terminus in the lumen of the ER, controls the topology of multi-pass membrane proteins like the G protein-coupled receptors. By regulating the insertion of various proteins in membranes, it is indirectly involved in many cellular processes. The chain is ER membrane protein complex subunit 8 (EMC8) from Homo sapiens (Human).